The following is a 79-amino-acid chain: Large ribosomal subunit protein uL29 (79 aa).

This sequence belongs to the universal ribosomal protein uL29 family.

The sequence is that of Large ribosomal subunit protein uL29 from Tropheryma whipplei (strain Twist) (Whipple's bacillus).